Here is a 484-residue protein sequence, read N- to C-terminus: Protein nucleotidyltransferase YdiU (484 aa).

Residues Gly87, Gly89, Arg90, Lys110, Asp122, Gly123, Arg173, and Arg180 each contribute to the ATP site. Asp249 functions as the Proton acceptor in the catalytic mechanism. Residues Asn250 and Asp259 each coordinate Mg(2+). Residue Asp259 participates in ATP binding.

Belongs to the SELO family. Mg(2+) is required as a cofactor. Mn(2+) serves as cofactor.

It carries out the reaction L-seryl-[protein] + ATP = 3-O-(5'-adenylyl)-L-seryl-[protein] + diphosphate. It catalyses the reaction L-threonyl-[protein] + ATP = 3-O-(5'-adenylyl)-L-threonyl-[protein] + diphosphate. The catalysed reaction is L-tyrosyl-[protein] + ATP = O-(5'-adenylyl)-L-tyrosyl-[protein] + diphosphate. The enzyme catalyses L-histidyl-[protein] + UTP = N(tele)-(5'-uridylyl)-L-histidyl-[protein] + diphosphate. It carries out the reaction L-seryl-[protein] + UTP = O-(5'-uridylyl)-L-seryl-[protein] + diphosphate. It catalyses the reaction L-tyrosyl-[protein] + UTP = O-(5'-uridylyl)-L-tyrosyl-[protein] + diphosphate. Nucleotidyltransferase involved in the post-translational modification of proteins. It can catalyze the addition of adenosine monophosphate (AMP) or uridine monophosphate (UMP) to a protein, resulting in modifications known as AMPylation and UMPylation. The sequence is that of Protein nucleotidyltransferase YdiU from Alcanivorax borkumensis (strain ATCC 700651 / DSM 11573 / NCIMB 13689 / SK2).